The following is a 615-amino-acid chain: Chaperone protein HscA (615 aa).

This sequence belongs to the heat shock protein 70 family.

Chaperone involved in the maturation of iron-sulfur cluster-containing proteins. Has a low intrinsic ATPase activity which is markedly stimulated by HscB. Involved in the maturation of IscU. The sequence is that of Chaperone protein HscA from Xenorhabdus nematophila (strain ATCC 19061 / DSM 3370 / CCUG 14189 / LMG 1036 / NCIMB 9965 / AN6).